Reading from the N-terminus, the 190-residue chain is MTYKLRPNQVIKKLGGRIIYLVGMMGSGKSTTGPHLAKLLKYSFIDQDELIEKVAKSSVSQIFREEGENGFRDIETQVLKQIGQRHSLVVATGGGLVTRSENWGVLHQGIVIWLDPNRELLFARLKSDKTVVRPLLDNKDPKDVLDSLIKQRYLSYAEADLHISIERETPEEVALVIFKKLSEIIRVQED.

Gly-26–Thr-31 contacts ATP. Residue Ser-30 coordinates Mg(2+). Substrate is bound by residues Asp-48, Arg-72, and Gly-94. An ATP-binding site is contributed by Arg-133. Arg-152 lines the substrate pocket.

Belongs to the shikimate kinase family. In terms of assembly, monomer. Mg(2+) is required as a cofactor.

It localises to the cytoplasm. The catalysed reaction is shikimate + ATP = 3-phosphoshikimate + ADP + H(+). It participates in metabolic intermediate biosynthesis; chorismate biosynthesis; chorismate from D-erythrose 4-phosphate and phosphoenolpyruvate: step 5/7. In terms of biological role, catalyzes the specific phosphorylation of the 3-hydroxyl group of shikimic acid using ATP as a cosubstrate. This is Shikimate kinase from Prochlorococcus marinus (strain SARG / CCMP1375 / SS120).